Reading from the N-terminus, the 171-residue chain is MNDLNELKKYIQDVKDFPIKGIVFKDISPLLANGEIFRIVVEKMAEKVREVDVIIGPDARGFIFGAAVASYLKKPFVMIRKEGKLPHNTIKIDYKLEYGMGSLEIQKDLIKPGQSVAILDDVLATGGTTKASVELVKKLGAKVTKAVFLMELEFLNGKEKINAEVISLLKY.

It belongs to the purine/pyrimidine phosphoribosyltransferase family. As to quaternary structure, homodimer.

Its subcellular location is the cytoplasm. It catalyses the reaction AMP + diphosphate = 5-phospho-alpha-D-ribose 1-diphosphate + adenine. It participates in purine metabolism; AMP biosynthesis via salvage pathway; AMP from adenine: step 1/1. In terms of biological role, catalyzes a salvage reaction resulting in the formation of AMP, that is energically less costly than de novo synthesis. The polypeptide is Adenine phosphoribosyltransferase (Mycoplasma mobile (strain ATCC 43663 / 163K / NCTC 11711) (Mesomycoplasma mobile)).